Reading from the N-terminus, the 349-residue chain is Ferredoxin--NADP reductase (349 aa).

Asp35, Gln43, Tyr48, Val88, Phe123, Asp288, and Thr329 together coordinate FAD.

The protein belongs to the ferredoxin--NADP reductase type 2 family. As to quaternary structure, homodimer. The cofactor is FAD.

The enzyme catalyses 2 reduced [2Fe-2S]-[ferredoxin] + NADP(+) + H(+) = 2 oxidized [2Fe-2S]-[ferredoxin] + NADPH. The sequence is that of Ferredoxin--NADP reductase from Colwellia psychrerythraea (strain 34H / ATCC BAA-681) (Vibrio psychroerythus).